A 309-amino-acid polypeptide reads, in one-letter code: Protein-L-isoaspartate O-methyltransferase (309 aa).

The interval 1–46 is disordered; sequence MSGERAKRFPLALEDLKRAPRKSDGRAGERHAAIAAPKAADKPAAV. Positions 14–32 are enriched in basic and acidic residues; sequence EDLKRAPRKSDGRAGERHA. Over residues 33–46 the composition is skewed to low complexity; sequence AIAAPKAADKPAAV. S156 is a catalytic residue.

It belongs to the methyltransferase superfamily. L-isoaspartyl/D-aspartyl protein methyltransferase family.

The protein localises to the cytoplasm. The enzyme catalyses [protein]-L-isoaspartate + S-adenosyl-L-methionine = [protein]-L-isoaspartate alpha-methyl ester + S-adenosyl-L-homocysteine. Its function is as follows. Catalyzes the methyl esterification of L-isoaspartyl residues in peptides and proteins that result from spontaneous decomposition of normal L-aspartyl and L-asparaginyl residues. It plays a role in the repair and/or degradation of damaged proteins. The protein is Protein-L-isoaspartate O-methyltransferase of Burkholderia vietnamiensis (strain G4 / LMG 22486) (Burkholderia cepacia (strain R1808)).